A 359-amino-acid chain; its full sequence is ELAV-like protein 2 (359 aa).

The disordered stretch occupies residues Met-1–Asn-33. RRM domains follow at residues Thr-39–Pro-117 and Ala-125–Asn-205. Ser-221 bears the Phosphoserine mark. Positions Trp-276–Asn-354 constitute an RRM 3 domain.

The protein belongs to the RRM elav family. Interacts with IGF2BP1. Interacts with MAP1B light chain LC1.

Its function is as follows. RNA-binding protein that binds to the 3' untranslated region (3'UTR) of target mRNAs. Seems to recognize a GAAA motif. Can bind to its own 3'UTR, the FOS 3'UTR and the ID 3'UTR. This chain is ELAV-like protein 2 (ELAVL2), found in Pongo abelii (Sumatran orangutan).